The sequence spans 542 residues: CTP synthase (542 aa).

Positions 1-265 (MTRYIFVTGG…DDFVVERFGL (265 aa)) are amidoligase domain. Residue serine 13 coordinates CTP. Residue serine 13 participates in UTP binding. ATP is bound by residues 14–19 (SLGKGI) and aspartate 71. 2 residues coordinate Mg(2+): aspartate 71 and glutamate 139. CTP-binding positions include 146–148 (DIE), 186–191 (KTKPTQ), and lysine 222. UTP contacts are provided by residues 186-191 (KTKPTQ) and lysine 222. Residues 290–541 (TIAMVGKYME…VKAALAQKNK (252 aa)) enclose the Glutamine amidotransferase type-1 domain. Residue glycine 351 coordinates L-glutamine. Cysteine 378 acts as the Nucleophile; for glutamine hydrolysis in catalysis. L-glutamine-binding positions include 379–382 (LGMQ), glutamate 402, and arginine 469. Catalysis depends on residues histidine 514 and glutamate 516.

This sequence belongs to the CTP synthase family. As to quaternary structure, homotetramer.

It catalyses the reaction UTP + L-glutamine + ATP + H2O = CTP + L-glutamate + ADP + phosphate + 2 H(+). The enzyme catalyses L-glutamine + H2O = L-glutamate + NH4(+). The catalysed reaction is UTP + NH4(+) + ATP = CTP + ADP + phosphate + 2 H(+). Its pathway is pyrimidine metabolism; CTP biosynthesis via de novo pathway; CTP from UDP: step 2/2. Its activity is regulated as follows. Allosterically activated by GTP, when glutamine is the substrate; GTP has no effect on the reaction when ammonia is the substrate. The allosteric effector GTP functions by stabilizing the protein conformation that binds the tetrahedral intermediate(s) formed during glutamine hydrolysis. Inhibited by the product CTP, via allosteric rather than competitive inhibition. Catalyzes the ATP-dependent amination of UTP to CTP with either L-glutamine or ammonia as the source of nitrogen. Regulates intracellular CTP levels through interactions with the four ribonucleotide triphosphates. This chain is CTP synthase, found in Pseudomonas putida (strain GB-1).